The following is a 135-amino-acid chain: Small ribosomal subunit protein uS11 (135 aa).

The protein belongs to the universal ribosomal protein uS11 family. As to quaternary structure, part of the 30S ribosomal subunit. Interacts with proteins S7 and S18. Binds to IF-3.

Located on the platform of the 30S subunit, it bridges several disparate RNA helices of the 16S rRNA. Forms part of the Shine-Dalgarno cleft in the 70S ribosome. This is Small ribosomal subunit protein uS11 from Protochlamydia amoebophila (strain UWE25).